The chain runs to 433 residues: Glutamate-1-semialdehyde 2,1-aminomutase (433 aa).

Position 266 is an N6-(pyridoxal phosphate)lysine (K266).

Belongs to the class-III pyridoxal-phosphate-dependent aminotransferase family. HemL subfamily. As to quaternary structure, homodimer. It depends on pyridoxal 5'-phosphate as a cofactor.

Its subcellular location is the cytoplasm. The enzyme catalyses (S)-4-amino-5-oxopentanoate = 5-aminolevulinate. Its pathway is porphyrin-containing compound metabolism; protoporphyrin-IX biosynthesis; 5-aminolevulinate from L-glutamyl-tRNA(Glu): step 2/2. This chain is Glutamate-1-semialdehyde 2,1-aminomutase, found in Psychrobacter cryohalolentis (strain ATCC BAA-1226 / DSM 17306 / VKM B-2378 / K5).